The primary structure comprises 706 residues: ABC transporter D family member 2, chloroplastic (706 aa).

Residues 1 to 44 (MILMITAPVCPPHLLLRHSSLLRHESSIGNFHRKKNPRFRTVSC) constitute a chloroplast transit peptide. N-acetylserine is present on Ser-45. The next 5 membrane-spanning stretches (helical) occupy residues 88-108 (LAAVFALTLATTGISVGFNFL), 124-144 (FTKQLFYYLCAFAGGIPFFVL), 200-222 (TALSFSLTLVNATIDLISFSNIL), 237-257 (SFGGTAISVFLGKGLVNLNFL), and 326-346 (ILPVAVVAPMYFSGKIEFGVI). Residues 88 to 372 (LAAVFALTLA…VVYQFQAISS (285 aa)) enclose the ABC transmembrane type-1 domain. In terms of domain architecture, ABC transporter spans 430–697 (LEIEELTLQT…DAQDSLYGRL (268 aa)). An ATP-binding site is contributed by 464 to 471 (GPSGSGKT). The disordered stretch occupies residues 545 to 569 (TTPGGSNIDGSPPLLIREDGNEKPT). The span at 560–569 (IREDGNEKPT) shows a compositional bias: basic and acidic residues.

Belongs to the ABC transporter superfamily. ABCD family. Peroxisomal fatty acyl CoA transporter (TC 3.A.1.203) subfamily. In terms of assembly, homodimer or heterodimer.

The protein resides in the membrane. It localises to the plastid. The protein localises to the chloroplast. The chain is ABC transporter D family member 2, chloroplastic (ABCC2) from Arabidopsis thaliana (Mouse-ear cress).